Consider the following 260-residue polypeptide: uncharacterized protein (260 aa).

Residues 214–252 are a coiled coil; it reads IHQFIETEIERIMEAAKELKAEKKDMTSELNRLLLNTVE.

This is an uncharacterized protein from Bacillus subtilis (strain 168).